The sequence spans 60 residues: Large ribosomal subunit protein uL30 (60 aa).

Belongs to the universal ribosomal protein uL30 family. In terms of assembly, part of the 50S ribosomal subunit.

This is Large ribosomal subunit protein uL30 from Salinispora arenicola (strain CNS-205).